The primary structure comprises 130 residues: RutC family protein slr0709 (130 aa).

Belongs to the RutC family.

The polypeptide is RutC family protein slr0709 (Synechocystis sp. (strain ATCC 27184 / PCC 6803 / Kazusa)).